The sequence spans 266 residues: Bax inhibitor 1 (266 aa).

The interval 1 to 22 is disordered; the sequence is MPANYQSVPQDDPSVPNLAQAP. Helical transmembrane passes span 70–90, 92–112, 123–143, 147–167, 177–197, 201–221, and 240–260; these read LFVT…SFWV, MHPW…FGLI, IFLF…ITFF, IILE…AFTF, GGFL…FFFV, PFID…YILF, and LMLY…LGML.

This sequence belongs to the BI1 family. LFG subfamily.

It localises to the endoplasmic reticulum membrane. Its subcellular location is the mitochondrion membrane. The protein localises to the golgi apparatus membrane. It is found in the vacuole membrane. Functionally, links the unfolded protein response and programmed cell death and mediates mitochondrial-dependent apoptosis. Induces cell death and disruption of the mitochondrial transmembrane potential. The sequence is that of Bax inhibitor 1 (bxi1) from Schizosaccharomyces pombe (strain 972 / ATCC 24843) (Fission yeast).